Consider the following 471-residue polypeptide: V-type ATP synthase beta chain (471 aa).

This sequence belongs to the ATPase alpha/beta chains family.

In terms of biological role, produces ATP from ADP in the presence of a proton gradient across the membrane. The V-type beta chain is a regulatory subunit. In Streptococcus pyogenes serotype M49 (strain NZ131), this protein is V-type ATP synthase beta chain.